Here is a 366-residue protein sequence, read N- to C-terminus: Pectinesterase A (366 aa).

The N-terminal stretch at M1–A24 is a signal peptide. Residues T109 and Q153 each contribute to the substrate site. The active-site Proton donor is D178. A disulfide bridge connects residues C192 and C212. The active-site Nucleophile is the D199. The substrate site is built by R219, N226, Y230, R267, W269, and T272.

This sequence belongs to the pectinesterase family. In terms of assembly, monomer.

It is found in the secreted. It carries out the reaction [(1-&gt;4)-alpha-D-galacturonosyl methyl ester](n) + n H2O = [(1-&gt;4)-alpha-D-galacturonosyl](n) + n methanol + n H(+). Its pathway is glycan metabolism; pectin degradation; 2-dehydro-3-deoxy-D-gluconate from pectin: step 1/5. Its function is as follows. Involved in maceration and soft-rotting of plant tissue. This is Pectinesterase A (pemA) from Dickeya chrysanthemi (Pectobacterium chrysanthemi).